We begin with the raw amino-acid sequence, 44 residues long: Photosystem I reaction center subunit IX (44 aa).

The chain crosses the membrane as a helical span at residues 7 to 27 (YLSVAPVLSTLWFGSLAGLLI).

Belongs to the PsaJ family.

It localises to the plastid. The protein localises to the chloroplast thylakoid membrane. Functionally, may help in the organization of the PsaE and PsaF subunits. The protein is Photosystem I reaction center subunit IX of Lactuca sativa (Garden lettuce).